Consider the following 364-residue polypeptide: DNA replication and repair protein RecF (364 aa).

30 to 37 (GNNAQGKT) is a binding site for ATP.

Belongs to the RecF family.

It is found in the cytoplasm. Functionally, the RecF protein is involved in DNA metabolism; it is required for DNA replication and normal SOS inducibility. RecF binds preferentially to single-stranded, linear DNA. It also seems to bind ATP. The chain is DNA replication and repair protein RecF from Clostridium botulinum (strain ATCC 19397 / Type A).